The following is a 130-amino-acid chain: Glycine cleavage system H protein (130 aa).

One can recognise a Lipoyl-binding domain in the interval 22–103; sequence KAYIGISDCA…PYGSWIIAVE (82 aa). Lys63 is subject to N6-lipoyllysine.

It belongs to the GcvH family. The glycine cleavage system is composed of four proteins: P, T, L and H. Requires (R)-lipoate as cofactor.

In terms of biological role, the glycine cleavage system catalyzes the degradation of glycine. The H protein shuttles the methylamine group of glycine from the P protein to the T protein. This is Glycine cleavage system H protein from Clostridium botulinum (strain Kyoto / Type A2).